Reading from the N-terminus, the 256-residue chain is Hypodermin-B (256 aa).

An N-terminal signal peptide occupies residues methionine 1–glycine 22. A propeptide spans methionine 23–arginine 30 (activation peptide). The Peptidase S1 domain maps to isoleucine 31–lysine 254. Cysteine 56 and cysteine 72 are oxidised to a cystine. Catalysis depends on charge relay system residues histidine 71 and aspartate 116. Intrachain disulfides connect cysteine 180–cysteine 197 and cysteine 206–cysteine 230. Residue serine 210 is the Charge relay system of the active site.

Belongs to the peptidase S1 family.

The protein localises to the secreted. Protease that shows preferential cleavage after Arg and Lys residues. This Hypoderma lineatum (Early cattle grub) protein is Hypodermin-B.